Reading from the N-terminus, the 596-residue chain is Arginine--tRNA ligase (596 aa).

Residues 128–138 (ANPTSSLHVGH) carry the 'HIGH' region motif.

It belongs to the class-I aminoacyl-tRNA synthetase family. As to quaternary structure, monomer.

It localises to the cytoplasm. The enzyme catalyses tRNA(Arg) + L-arginine + ATP = L-arginyl-tRNA(Arg) + AMP + diphosphate. The protein is Arginine--tRNA ligase of Acinetobacter baumannii (strain AB307-0294).